We begin with the raw amino-acid sequence, 402 residues long: Plasminogen activator inhibitor 1 (402 aa).

The first 23 residues, Met-1–Ala-23, serve as a signal peptide directing secretion. N-linked (GlcNAc...) asparagine glycosylation is found at Asn-232, Asn-288, and Asn-352.

This sequence belongs to the serpin family. Forms a heterodimer with TMPRSS7. Interacts with VTN. Binds LRP1B; binding is followed by internalization and degradation. Interacts with PPP1CB. In complex with PLAU/uPA, interacts with PLAUR/uPAR. Interacts with SORL1 and LRP1, either alone or in complex with PLAU; these interactions are abolished in the presence of LRPAP1/RAP. The ternary complex composed of PLAUR-PLAU-PAI1 also interacts with SORL1. Interacts with PLAT/tPA. Also interacts with SORL1, when complexed to PLAT/tPA.

It is found in the secreted. In terms of biological role, serine protease inhibitor. Inhibits TMPRSS7. Is a primary inhibitor of tissue-type plasminogen activator (PLAT) and urokinase-type plasminogen activator (PLAU). As PLAT inhibitor, it is required for fibrinolysis down-regulation and is responsible for the controlled degradation of blood clots. As PLAU inhibitor, it is involved in the regulation of cell adhesion and spreading. Acts as a regulator of cell migration, independently of its role as protease inhibitor. It is required for stimulation of keratinocyte migration during cutaneous injury repair. It is involved in cellular and replicative senescence. Plays a role in alveolar type 2 cells senescence in the lung. Is involved in the regulation of cementogenic differentiation of periodontal ligament stem cells, and regulates odontoblast differentiation and dentin formation during odontogenesis. The sequence is that of Plasminogen activator inhibitor 1 (SERPINE1) from Sus scrofa (Pig).